A 152-amino-acid polypeptide reads, in one-letter code: DNA-binding transcriptional activator DecR (152 aa).

Positions 2–63 constitute an HTH asnC-type domain; sequence LDKIDRKLLA…LLDPEKIGLG (62 aa). Positions 21 to 40 form a DNA-binding region, H-T-H motif; that stretch reads LQALAEAVNLTTTPCWKRLK.

Functionally, plays a role in L-cysteine detoxification. Binds to the dlsT(yhaO)-yhaM operon promoter in the presence but not absence of L-cysteine; activates transcription from the dlsT(yhaO)-yhaM operon. This Escherichia coli O157:H7 protein is DNA-binding transcriptional activator DecR (decR).